Reading from the N-terminus, the 572-residue chain is Probable inactive glycosyltransferase 25 family member 3 (572 aa).

Asn52, Asn130, Asn214, and Asn337 each carry an N-linked (GlcNAc...) asparagine glycan. Residues 569-572 (RDEL) carry the Prevents secretion from ER motif.

It belongs to the glycosyltransferase 25 family.

Its subcellular location is the endoplasmic reticulum lumen. In terms of biological role, probable cell adhesion protein involved in leukocyte transmigration across the blood-brain barrier. Does not express any beta-galactosyltransferase activity in vitro. The protein is Probable inactive glycosyltransferase 25 family member 3 (Cercam) of Rattus norvegicus (Rat).